The primary structure comprises 325 residues: NADH-quinone oxidoreductase subunit H (325 aa).

A run of 8 helical transmembrane segments spans residues 11–31, 81–101, 114–134, 154–174, 186–206, 237–257, 265–285, and 304–324; these read VIIAVVKALVILFVVVGCGAF, VIFTLAPMIAFTSLLLAMAIV, IGLLFFLMMAGLAVYAVLFAG, LSYEVFLGLSLMGVVAQAGSF, LWNVIPQFLGFLTFCIAGVAV, FFVGEYVGIVTVSALIVTLFF, LPPVIWFALKTAFFMMMFILI, and VCLPLTLLNLLATAAVILYTA.

Belongs to the complex I subunit 1 family. NDH-1 is composed of 13 different subunits. Subunits NuoA, H, J, K, L, M, N constitute the membrane sector of the complex.

It localises to the cell inner membrane. It carries out the reaction a quinone + NADH + 5 H(+)(in) = a quinol + NAD(+) + 4 H(+)(out). In terms of biological role, NDH-1 shuttles electrons from NADH, via FMN and iron-sulfur (Fe-S) centers, to quinones in the respiratory chain. The immediate electron acceptor for the enzyme in this species is believed to be ubiquinone. Couples the redox reaction to proton translocation (for every two electrons transferred, four hydrogen ions are translocated across the cytoplasmic membrane), and thus conserves the redox energy in a proton gradient. This subunit may bind ubiquinone. The polypeptide is NADH-quinone oxidoreductase subunit H (Erwinia tasmaniensis (strain DSM 17950 / CFBP 7177 / CIP 109463 / NCPPB 4357 / Et1/99)).